The sequence spans 889 residues: Translation initiation factor IF-2 (889 aa).

The interval 1–299 is disordered; sequence MTDNKDDKTL…EKFKRSQMQE (299 aa). The span at 61–76 shows a compositional bias: low complexity; sequence ITPVAATPAARPAEQR. Positions 77–93 are enriched in pro residues; that stretch reads PMPPQPSGRPAPQPQPH. Residues 116-182 are compositionally biased toward basic and acidic residues; sequence MEARRRALAE…EAEKTEEKVE (67 aa). Positions 196 to 215 are enriched in low complexity; sequence RPQPGRAAPAATPAAPDGAA. Residues 220–231 show a composition bias toward basic and acidic residues; the sequence is RGTESEEDERRR. The region spanning 387–554 is the tr-type G domain; sequence SRPPIVTIMG…AILLQSEILD (168 aa). Residues 396–403 are G1; sequence GHVDHGKT. Residue 396 to 403 coordinates GTP; that stretch reads GHVDHGKT. Residues 421-425 are G2; it reads GITQH. The tract at residues 442-445 is G3; that stretch reads DTPG. GTP-binding positions include 442 to 446 and 496 to 499; these read DTPGH and NKID. A G4 region spans residues 496-499; the sequence is NKID. The tract at residues 532-534 is G5; it reads SAK.

It belongs to the TRAFAC class translation factor GTPase superfamily. Classic translation factor GTPase family. IF-2 subfamily.

It localises to the cytoplasm. Functionally, one of the essential components for the initiation of protein synthesis. Protects formylmethionyl-tRNA from spontaneous hydrolysis and promotes its binding to the 30S ribosomal subunits. Also involved in the hydrolysis of GTP during the formation of the 70S ribosomal complex. In Rhizobium meliloti (strain 1021) (Ensifer meliloti), this protein is Translation initiation factor IF-2.